A 381-amino-acid polypeptide reads, in one-letter code: Alkanesulfonate monooxygenase (381 aa).

The protein belongs to the SsuD family. Homotetramer.

The catalysed reaction is an alkanesulfonate + FMNH2 + O2 = an aldehyde + FMN + sulfite + H2O + 2 H(+). In terms of biological role, catalyzes the desulfonation of aliphatic sulfonates. The chain is Alkanesulfonate monooxygenase from Escherichia coli O7:K1 (strain IAI39 / ExPEC).